Consider the following 363-residue polypeptide: Cytoplasmic tRNA 2-thiolation protein 1 (363 aa).

Positions 337 to 363 (DGDCEQQATRSERNRSSLQGKHGNFDF) are disordered.

This sequence belongs to the TtcA family. CTU1/NCS6/ATPBD3 subfamily.

Its subcellular location is the cytoplasm. The protein operates within tRNA modification; 5-methoxycarbonylmethyl-2-thiouridine-tRNA biosynthesis. Plays a central role in 2-thiolation of mcm(5)S(2)U at tRNA wobble positions of tRNA(Lys), tRNA(Glu) and tRNA(Gln). Directly binds tRNAs and probably acts by catalyzing adenylation of tRNAs, an intermediate required for 2-thiolation. It is unclear whether it acts as a sulfurtransferase that transfers sulfur from thiocarboxylated URM1 onto the uridine of tRNAs at wobble position. In Oryza sativa subsp. japonica (Rice), this protein is Cytoplasmic tRNA 2-thiolation protein 1.